A 171-amino-acid chain; its full sequence is Spiderine-2a (171 aa).

An N-terminal signal peptide occupies residues 1–18 (MKFALVLLGVCAFYLVNA). Residues 19–58 (TGDLETELEASELQELQEALDLIAETPLESLEAEELEEAR) constitute a propeptide, removed in mature form. Residues 59 to 104 (KFKLPKINWGKLASKAKDVYKKGQKLAKNKNVKKALKYGKQLAENL) form a linear cationic cytotoxin domain region. The Oxytoxin-type inhibitor cystine knot (ICK) domain occupies 118-171 (NNKCWAIGTRCTDDCDCCPEHHCHCPAKSWTFGLIPCSCQVTESDKVNKCPPAE). Disulfide bonds link Cys121-Cys135, Cys128-Cys140, Cys132-Cys167, Cys134-Cys156, and Cys142-Cys154.

Disulfide bonds. Expressed by the venom gland.

It is found in the secreted. Has antimicrobial, insecticidal, cytolytic and cytotoxic activity. This Oxyopes takobius (Lynx spider) protein is Spiderine-2a.